Consider the following 213-residue polypeptide: Uridine kinase (213 aa).

Residue 13–20 coordinates ATP; the sequence is GASASGKS.

Belongs to the uridine kinase family.

Its subcellular location is the cytoplasm. The catalysed reaction is uridine + ATP = UMP + ADP + H(+). The enzyme catalyses cytidine + ATP = CMP + ADP + H(+). The protein operates within pyrimidine metabolism; CTP biosynthesis via salvage pathway; CTP from cytidine: step 1/3. It functions in the pathway pyrimidine metabolism; UMP biosynthesis via salvage pathway; UMP from uridine: step 1/1. The protein is Uridine kinase of Haemophilus influenzae (strain PittEE).